Here is a 342-residue protein sequence, read N- to C-terminus: Heat-inducible transcription repressor HrcA (342 aa).

Belongs to the HrcA family.

Its function is as follows. Negative regulator of class I heat shock genes (grpE-dnaK-dnaJ and groELS operons). Prevents heat-shock induction of these operons. The protein is Heat-inducible transcription repressor HrcA of Leptospira borgpetersenii serovar Hardjo-bovis (strain JB197).